A 757-amino-acid chain; its full sequence is Glutathione biosynthesis bifunctional protein GshAB (757 aa).

Residues 1–337 (MNIQQIVKEK…LGRARLGEVA (337 aa)) form a glutamate--cysteine ligase region. The ATP-grasp domain maps to 494–757 (KKVLAKAGFN…VLGMLFPELV (264 aa)). 521–580 (PLFEGKAVVIKPKSTNFGLGISIFQQGVHDKADFAKAVEIAFREDKEVMVEDYLVGTEYR) contributes to the ATP binding site. 3 residues coordinate Mg(2+): aspartate 702, glutamate 723, and asparagine 725. Mn(2+)-binding residues include aspartate 702, glutamate 723, and asparagine 725.

In the N-terminal section; belongs to the glutamate--cysteine ligase type 1 family. Type 2 subfamily. As to quaternary structure, monomer. The cofactor is Mg(2+). Requires Mn(2+) as cofactor.

It catalyses the reaction L-cysteine + L-glutamate + ATP = gamma-L-glutamyl-L-cysteine + ADP + phosphate + H(+). It carries out the reaction gamma-L-glutamyl-L-cysteine + glycine + ATP = glutathione + ADP + phosphate + H(+). It functions in the pathway sulfur metabolism; glutathione biosynthesis; glutathione from L-cysteine and L-glutamate: step 1/2. The protein operates within sulfur metabolism; glutathione biosynthesis; glutathione from L-cysteine and L-glutamate: step 2/2. In terms of biological role, synthesizes glutathione from L-glutamate and L-cysteine via gamma-L-glutamyl-L-cysteine. The protein is Glutathione biosynthesis bifunctional protein GshAB of Mannheimia succiniciproducens (strain KCTC 0769BP / MBEL55E).